The primary structure comprises 397 residues: Tyrosine--tRNA ligase (397 aa).

The short motif at 41 to 50 is the 'HIGH' region element; the sequence is PTAPDLHLGH. A 'KMSKS' region motif is present at residues 225–229; it reads KMSKS. Lys228 provides a ligand contact to ATP. The region spanning 340–396 is the S4 RNA-binding domain; it reads AFLADSGLAGSRGEAKRLIKQGALSLDGEKLDDPNTPLTAGEYVVRLGKKRFLRLIV.

It belongs to the class-I aminoacyl-tRNA synthetase family. TyrS type 2 subfamily. In terms of assembly, homodimer.

It is found in the cytoplasm. The enzyme catalyses tRNA(Tyr) + L-tyrosine + ATP = L-tyrosyl-tRNA(Tyr) + AMP + diphosphate + H(+). Catalyzes the attachment of tyrosine to tRNA(Tyr) in a two-step reaction: tyrosine is first activated by ATP to form Tyr-AMP and then transferred to the acceptor end of tRNA(Tyr). The chain is Tyrosine--tRNA ligase from Oleidesulfovibrio alaskensis (strain ATCC BAA-1058 / DSM 17464 / G20) (Desulfovibrio alaskensis).